Here is a 373-residue protein sequence, read N- to C-terminus: 3-dehydroquinate synthase (373 aa).

Residues 74 to 79, 108 to 112, 132 to 133, K145, K154, and 172 to 175 contribute to the NAD(+) site; these read DAEAGK, GAATD, TT, and TLET. Zn(2+) contacts are provided by E187, H250, and H266.

The protein belongs to the sugar phosphate cyclases superfamily. Dehydroquinate synthase family. Co(2+) is required as a cofactor. Zn(2+) serves as cofactor. The cofactor is NAD(+).

The protein localises to the cytoplasm. The enzyme catalyses 7-phospho-2-dehydro-3-deoxy-D-arabino-heptonate = 3-dehydroquinate + phosphate. It participates in metabolic intermediate biosynthesis; chorismate biosynthesis; chorismate from D-erythrose 4-phosphate and phosphoenolpyruvate: step 2/7. In terms of biological role, catalyzes the conversion of 3-deoxy-D-arabino-heptulosonate 7-phosphate (DAHP) to dehydroquinate (DHQ). This chain is 3-dehydroquinate synthase, found in Nocardia farcinica (strain IFM 10152).